A 150-amino-acid chain; its full sequence is UPF0540 protein At1g62080 (150 aa).

A signal peptide spans Met-1–Ala-21. Positions Ala-119–Lys-135 are enriched in low complexity. The tract at residues Ala-119 to Asp-150 is disordered.

Belongs to the UPF0540 family.

This is UPF0540 protein At1g62080 from Arabidopsis thaliana (Mouse-ear cress).